The sequence spans 370 residues: Homospermidine synthase 2 (370 aa).

It belongs to the deoxyhypusine synthase family. In terms of assembly, homotetramer. Requires NAD(+) as cofactor. In terms of processing, the N-terminus is blocked. As to expression, expressed in roots.

It catalyses the reaction putrescine + spermidine = sym-homospermidine + propane-1,3-diamine. Its pathway is alkaloid biosynthesis; pyrrolizidine alkaloid biosynthesis. Its function is as follows. Catalyzes the transfer of an aminobutyl unit from spermidine onto putrescine. The resulting polyamine homospermidine is a precursor in the biosynthesis of pyrrolizidine alkaloids. The sequence is that of Homospermidine synthase 2 from Senecio vernalis (Spring groundsel).